The following is a 443-amino-acid chain: ATP-dependent protease ATPase subunit HslU (443 aa).

ATP contacts are provided by residues Val18, 60-65, Asp256, Glu321, and Arg393; that span reads GVGKTE.

Belongs to the ClpX chaperone family. HslU subfamily. As to quaternary structure, a double ring-shaped homohexamer of HslV is capped on each side by a ring-shaped HslU homohexamer. The assembly of the HslU/HslV complex is dependent on binding of ATP.

The protein resides in the cytoplasm. In terms of biological role, ATPase subunit of a proteasome-like degradation complex; this subunit has chaperone activity. The binding of ATP and its subsequent hydrolysis by HslU are essential for unfolding of protein substrates subsequently hydrolyzed by HslV. HslU recognizes the N-terminal part of its protein substrates and unfolds these before they are guided to HslV for hydrolysis. The chain is ATP-dependent protease ATPase subunit HslU from Azoarcus sp. (strain BH72).